Reading from the N-terminus, the 451-residue chain is Phosphoglucosamine mutase (451 aa).

Catalysis depends on S103, which acts as the Phosphoserine intermediate. Residues S103, D243, D245, and D247 each contribute to the Mg(2+) site. Phosphoserine is present on S103.

Belongs to the phosphohexose mutase family. Mg(2+) serves as cofactor. Activated by phosphorylation.

It catalyses the reaction alpha-D-glucosamine 1-phosphate = D-glucosamine 6-phosphate. In terms of biological role, catalyzes the conversion of glucosamine-6-phosphate to glucosamine-1-phosphate. In Lactiplantibacillus plantarum (strain ATCC BAA-793 / NCIMB 8826 / WCFS1) (Lactobacillus plantarum), this protein is Phosphoglucosamine mutase.